Consider the following 322-residue polypeptide: 3-hydroxyacyl-CoA dehydrogenase FVEG_12628 (322 aa).

A helical transmembrane segment spans residues Ile5–Leu25. Glu151 functions as the For hydroxyacyl-coenzyme A dehydrogenase activity in the catalytic mechanism.

It belongs to the 3-hydroxyacyl-CoA dehydrogenase family.

It localises to the membrane. 3-hydroxyacyl-CoA dehydrogenase; part of the Fusarium detoxification of benzoxazolinone cluster 2 (FDB2) involved in the degradation of benzoxazolinones produced by the host plant. Maize, wheat, and rye produce the 2 benzoxazinone phytoanticipins 2,4-dihy-droxy-7-methoxy-1,4-benzoxazin-3-one (DIMBOA) and 2,4-dihydroxy-1,4-benzoxazin-3-one (DIBOA) that, due to their inherent instability once released, spontaneously degrade to the more stable corresponding benzoxazolinones, 6-methoxy-2-benzoxazolinone (MBOA) and 2-benzoxazolinone (BOA), respectively. The first step in the detoxification of benzoxazolinones involves the hydrolysis of the cyclic ester bond of benzoxazolinones by the FDB1 cluster gamma-lactamase MBL1 to aminophenols. MBL1 is able to convert BOA into 2-aminophenol (2-AP), as well as MBOA into 5-methoxy-2-aminophenol (2-AMP). The FDB2 cluster N-malonyltransferase FDB2/NAT1 then metabolizes aminophenols via N-malonylation to non-toxic malonamic acids. FDB2/NAT1 converts 2-AP into N-(2-hydroxyphenyl) malonamic acid (HPMA) and 2-AMP into N-(2-hydroxy-4-methoxyphenyl) malonamic acid (HMPMA). The duplicated dienlactone hydrolases DLH1 and DLH2 may provide redundant function for hydrolyzing the lactone moiety in the BOA molecule. The roles of the amidases an other enzymes encoded by the 2 FDB clusters have not been identified so far. This is 3-hydroxyacyl-CoA dehydrogenase FVEG_12628 from Gibberella moniliformis (strain M3125 / FGSC 7600) (Maize ear and stalk rot fungus).